A 498-amino-acid chain; its full sequence is Probable cytosol aminopeptidase (498 aa).

Mn(2+)-binding residues include lysine 264 and aspartate 269. Residue lysine 276 is part of the active site. Positions 287, 346, and 348 each coordinate Mn(2+). Arginine 350 is an active-site residue.

Belongs to the peptidase M17 family. It depends on Mn(2+) as a cofactor.

Its subcellular location is the cytoplasm. It catalyses the reaction Release of an N-terminal amino acid, Xaa-|-Yaa-, in which Xaa is preferably Leu, but may be other amino acids including Pro although not Arg or Lys, and Yaa may be Pro. Amino acid amides and methyl esters are also readily hydrolyzed, but rates on arylamides are exceedingly low.. It carries out the reaction Release of an N-terminal amino acid, preferentially leucine, but not glutamic or aspartic acids.. Its function is as follows. Presumably involved in the processing and regular turnover of intracellular proteins. Catalyzes the removal of unsubstituted N-terminal amino acids from various peptides. This is Probable cytosol aminopeptidase from Brucella anthropi (strain ATCC 49188 / DSM 6882 / CCUG 24695 / JCM 21032 / LMG 3331 / NBRC 15819 / NCTC 12168 / Alc 37) (Ochrobactrum anthropi).